A 350-amino-acid polypeptide reads, in one-letter code: Cephaeline 6'-O-methyltransferase CiOMT (350 aa).

S-adenosyl-L-methionine-binding residues include Gly-193, Asp-216, Asp-236, Met-237, and Lys-250. Residue His-254 is the Proton acceptor of the active site.

It belongs to the class I-like SAM-binding methyltransferase superfamily. Cation-independent O-methyltransferase family.

It localises to the cytoplasm. The protein resides in the cytosol. It carries out the reaction 7'-O-demethylcephaeline + S-adenosyl-L-methionine = cephaeline + S-adenosyl-L-homocysteine + H(+). The enzyme catalyses cephaeline + S-adenosyl-L-methionine = emetine + S-adenosyl-L-homocysteine + H(+). Its pathway is alkaloid biosynthesis. Inhibited by Co(2+), Ni(2+), Zn(2+) and Mn(2+) ions. Its function is as follows. O-methyltransferase involved in the biosynthesis of ipecac and benzylisoquinoline monoterpenoid-isoquinoline alkaloids natural products, starting by the condensation of dopamine and secologanin, and including emetine and cephaeline, drugs used both as anti-protozoal (e.g. treatment of ameobiasis) and as emetic agents. Catalyzes successively the 7'-O-methylation of 7'-O-demethylcephaeline to produce cephaeline, and its 6'-O-methylation to produce emetine. This is Cephaeline 6'-O-methyltransferase CiOMT from Carapichea ipecacuanha (Ipecac).